Here is a 202-residue protein sequence, read N- to C-terminus: Protein cuti-1 (202 aa).

Topologically, residues 1–37 (MPNDRVAPLPPNFVYSPHDKFYYAPATCNSMHYTTAS) are cytoplasmic. The helical transmembrane segment at 38-58 (YISAFIEFLVMGTGAICFYVM) threads the bilayer. Residues 59-68 (SHKSDSIGKW) are Extracellular-facing. Residues 69–89 (LFYIQAGITVLSLLTSALMAF) traverse the membrane as a helical segment. The Cytoplasmic segment spans residues 90-107 (GLWKENPQMLGSKLKFIE). The chain crosses the membrane as a helical span at residues 108–128 (FIICFLLIWAVISIVCMAFGI). At 129-148 (QFTRQVFGIFGKVHRIEQDY) the chain is on the extracellular side. Residues 149–169 (GPIWPFNIAVVSFFTAAIAIW) form a helical membrane-spanning segment. The Cytoplasmic segment spans residues 170–202 (TRIIIQGAADYLYDKAYFADKQNVELRESSKTR).

In terms of assembly, interacts with vps-39.

Its subcellular location is the cell membrane. It localises to the cytoplasm. In terms of biological role, involved in cuticle formation and ensures cuticle shedding during larval development. Plays a role in maintaining the hypodermis. In association with vps-39, may play a role in vesicle tethering. The protein is Protein cuti-1 of Caenorhabditis elegans.